The primary structure comprises 513 residues: MVMAILTRQSRRKHLRVYNPPQQAAEVRYTPSATNSSAVPPVAVPPKPTADTILGKQYEDVRSVYSFGKELGRGQFGVTYLCTEIASGRQYACKSISKRKLVSKADREDIRREIQIMQHLSGQPNIVEFRGAYEDKSNVHVVMELCAGGELFDRIIAKGHYTERAAATICRAVVNVVNICHFMGVMHRDLKPENFLLATMEENAMLKATDFGLSVFIEEGKMYRDIVGSAYYVAPEVLRRSYGKEIDVWSAGVILYILLSGVPPFWAEIEKGIFDAILHEEIDFESQPWPSISESAKDLVRKMLTRDPKKRLTSAQVLQHQWLREGGEASDKPIDSAVLSRMKQFRAMNKLKKMALKVIASNLNEEEIKGLKQMFMNMDTDNSGTITYEELKAGLAKLGSKLSEAEVKQLMEAADVDGNGSIDYVEFITATMHRHKLERDEHLFKAFQYFDKDNSGFITRDELESALIEHEMGDTSTIREIISEVDTDNDGRINYEEFCAMMRGGMQQPMRLK.

Positions 65–323 constitute a Protein kinase domain; that stretch reads YSFGKELGRG…SAQVLQHQWL (259 aa). ATP-binding positions include 71 to 79 and Lys94; that span reads LGRGQFGVT. Asp189 serves as the catalytic Proton acceptor. Residues 329–359 are autoinhibitory domain; it reads ASDKPIDSAVLSRMKQFRAMNKLKKMALKVI. EF-hand domains are found at residues 366–401, 402–437, 438–473, and 478–508; these read EEIKGLKQMFMNMDTDNSGTITYEELKAGLAKLGSK, LSEAEVKQLMEAADVDGNGSIDYVEFITATMHRHKL, ERDEHLFKAFQYFDKDNSGFITRDELESALIEHEMG, and IREIISEVDTDNDGRINYEEFCAMMRGGMQQ. Positions 379, 381, 383, 385, 390, 415, 417, 419, 421, 426, 451, 453, 455, 462, 486, 488, 490, 492, and 497 each coordinate Ca(2+).

Belongs to the protein kinase superfamily. Ser/Thr protein kinase family. CDPK subfamily.

It catalyses the reaction L-seryl-[protein] + ATP = O-phospho-L-seryl-[protein] + ADP + H(+). It carries out the reaction L-threonyl-[protein] + ATP = O-phospho-L-threonyl-[protein] + ADP + H(+). Its activity is regulated as follows. Activated by calcium. Autophosphorylation may play an important role in the regulation of the kinase activity. In terms of biological role, may play a role in signal transduction pathways that involve calcium as a second messenger. The polypeptide is Calcium-dependent protein kinase 2 (CPK2) (Zea mays (Maize)).